Reading from the N-terminus, the 115-residue chain is U3-lycotoxin-Ls1a (115 aa).

Positions 1-20 (MKFVLLFGVLLVTLFSYSSA) are cleaved as a signal peptide. Residues 21-44 (EMLDDFDQADEEELLSLIEKEEAR) constitute a propeptide that is removed on maturation. Cystine bridges form between Cys48–Cys63, Cys55–Cys72, Cys62–Cys87, and Cys74–Cys85.

It belongs to the neurotoxin 19 (CSTX) family. 01 subfamily. In terms of tissue distribution, expressed by the venom gland.

The protein resides in the secreted. This is U3-lycotoxin-Ls1a from Lycosa singoriensis (Wolf spider).